We begin with the raw amino-acid sequence, 448 residues long: Vitamin D3 receptor (448 aa).

A DNA-binding region (nuclear receptor) is located at residues 41–116; that stretch reads PRICGVCGDR…IGMMKEFILT (76 aa). Positions 44, 47, 61, 64, 80, 86, 96, and 99 each coordinate Zn(2+). 2 consecutive NR C4-type zinc fingers follow at residues 44-64 and 80-104; these read CGVCGDRATGFHFNAMTCEGC and CPFSGDCKITKDNRRHCQACRLKRC. The interval 117–146 is hinge; the sequence is DEEVQRKREMILKRKEEEALKESLKPKLSE. Residues 147–444 enclose the NR LBD domain; it reads EQQKVINILL…LTPLVLEVFG (298 aa). Serine 258 lines the calcitriol pocket. The tract at residues 267–285 is interaction with coactivator LXXLL motif; the sequence is KMIPGFRDLTAEDQIALLK. Calcitriol is bound by residues arginine 295, serine 299, histidine 326, and histidine 418. The short motif at 437 to 445 is the 9aaTAD element; that stretch reads PLVLEVFGN.

It belongs to the nuclear hormone receptor family. NR1 subfamily. As to quaternary structure, homodimer in the absence of bound vitamin D3. Heterodimer with RXRA after vitamin D3 binding.

The protein localises to the nucleus. It localises to the cytoplasm. Its function is as follows. Nuclear receptor for calcitriol, the active form of vitamin D3 which mediates the action of this vitamin on cells. Enters the nucleus upon vitamin D3 binding where it forms heterodimers with the retinoid X receptor/RXR. The VDR-RXR heterodimers bind to specific response elements on DNA and activate the transcription of vitamin D3-responsive target genes. Plays a central role in calcium homeostasis. Also functions as a receptor for the secondary bile acid lithocholic acid (LCA) and its metabolites. The protein is Vitamin D3 receptor (VDR) of Coturnix japonica (Japanese quail).